A 160-amino-acid chain; its full sequence is Phosphopantetheine adenylyltransferase (160 aa).

Residue S9 coordinates substrate. ATP is bound by residues 9-10 (SF) and H17. Substrate is bound by residues K41, V73, and K87. Residues 88-90 (GLR), E98, and 122-128 (YSFVSSS) contribute to the ATP site.

It belongs to the bacterial CoaD family. As to quaternary structure, homohexamer. It depends on Mg(2+) as a cofactor.

It localises to the cytoplasm. The enzyme catalyses (R)-4'-phosphopantetheine + ATP + H(+) = 3'-dephospho-CoA + diphosphate. The protein operates within cofactor biosynthesis; coenzyme A biosynthesis; CoA from (R)-pantothenate: step 4/5. Functionally, reversibly transfers an adenylyl group from ATP to 4'-phosphopantetheine, yielding dephospho-CoA (dPCoA) and pyrophosphate. The chain is Phosphopantetheine adenylyltransferase from Mycobacterium avium (strain 104).